Consider the following 171-residue polypeptide: Protein TIFY 11d (171 aa).

The Tify domain occupies 65-100 (PSAGTAPLTIFYDGRMVVVDDVPVEKAAELMRLAGS). The short motif at 117-142 (PIARKASLQRFLQKRKHRITTTSEPY) is the Jas element. A Nuclear localization signal motif is present at residues 119 to 126 (ARKASLQR).

It belongs to the TIFY/JAZ family. Interacts with BHLH148 and COI1A. Interacts with COI1A, COI1B and COI2 in a coronatine-dependent manner. Coronatine is an analog of jasmonoyl isoleucine (JA-Ile). In terms of processing, ubiquitinated. Increase in jasmonoyl isoleucine (JA-Ile) levels mediates its degradation via COI1A-mediated proteasome pathway.

It is found in the nucleus. Repressor of jasmonate (JA) responses. May act on an initial response of JA-regulated gene expression toward drought tolerance as part of a BHLH148-TIFY11D/JAZ12-COI1A complex. This Oryza sativa subsp. japonica (Rice) protein is Protein TIFY 11d.